Reading from the N-terminus, the 273-residue chain is HTH-type transcriptional activator RhaS (273 aa).

Residues 174-272 (YQLLDWLQNN…SQSPRDLRSQ (99 aa)) form the HTH araC/xylS-type domain. DNA-binding regions (H-T-H motif) lie at residues 191–212 (PELA…KNKT) and 239–262 (VTDI…KREF).

Binds DNA as a dimer.

It localises to the cytoplasm. Its function is as follows. Activates expression of the rhaBAD and rhaT operons. This is HTH-type transcriptional activator RhaS from Yersinia pseudotuberculosis serotype I (strain IP32953).